The primary structure comprises 116 residues: T cell receptor alpha variable 38-2/delta variable 8 (116 aa).

An N-terminal signal peptide occupies residues 1 to 21; sequence MACPGFLWALVISTCLEFSMA. In terms of domain architecture, Ig-like spans 22 to 116; sequence QTVTQSQPEM…AAMYFCAYRS (95 aa). C43 and C112 are disulfide-bonded. An N-linked (GlcNAc...) asparagine glycan is attached at N78.

As to quaternary structure, alpha-beta TR is a heterodimer composed of an alpha and beta chain; disulfide-linked. The alpha-beta TR is associated with the transmembrane signaling CD3 coreceptor proteins to form the TR-CD3 (TcR or TCR). The assembly of alpha-beta TR heterodimers with CD3 occurs in the endoplasmic reticulum where a single alpha-beta TR heterodimer associates with one CD3D-CD3E heterodimer, one CD3G-CD3E heterodimer and one CD247 homodimer forming a stable octameric structure. CD3D-CD3E and CD3G-CD3E heterodimers preferentially associate with TR alpha and TR beta chains, respectively. The association of the CD247 homodimer is the last step of TcR assembly in the endoplasmic reticulum and is required for transport to the cell surface.

The protein resides in the cell membrane. Functionally, v region of the variable domain of T cell receptor (TR) alpha chain that participates in the antigen recognition. Alpha-beta T cell receptors are antigen specific receptors which are essential to the immune response and are present on the cell surface of T lymphocytes. Recognize peptide-major histocompatibility (MH) (pMH) complexes that are displayed by antigen presenting cells (APC), a prerequisite for efficient T cell adaptive immunity against pathogens. Binding of alpha-beta TR to pMH complex initiates TR-CD3 clustering on the cell surface and intracellular activation of LCK that phosphorylates the ITAM motifs of CD3G, CD3D, CD3E and CD247 enabling the recruitment of ZAP70. In turn ZAP70 phosphorylates LAT, which recruits numerous signaling molecules to form the LAT signalosome. The LAT signalosome propagates signal branching to three major signaling pathways, the calcium, the mitogen-activated protein kinase (MAPK) kinase and the nuclear factor NF-kappa-B (NF-kB) pathways, leading to the mobilization of transcription factors that are critical for gene expression and essential for T cell growth and differentiation. The T cell repertoire is generated in the thymus, by V-(D)-J rearrangement. This repertoire is then shaped by intrathymic selection events to generate a peripheral T cell pool of self-MH restricted, non-autoaggressive T cells. Post-thymic interaction of alpha-beta TR with the pMH complexes shapes TR structural and functional avidity. This chain is T cell receptor alpha variable 38-2/delta variable 8, found in Homo sapiens (Human).